Consider the following 137-residue polypeptide: Holo-[acyl-carrier-protein] synthase (137 aa).

Residues Asp-8 and Glu-57 each contribute to the Mg(2+) site.

Belongs to the P-Pant transferase superfamily. AcpS family. The cofactor is Mg(2+).

Its subcellular location is the cytoplasm. The enzyme catalyses apo-[ACP] + CoA = holo-[ACP] + adenosine 3',5'-bisphosphate + H(+). In terms of biological role, transfers the 4'-phosphopantetheine moiety from coenzyme A to a Ser of acyl-carrier-protein. The polypeptide is Holo-[acyl-carrier-protein] synthase (Cereibacter sphaeroides (strain ATCC 17023 / DSM 158 / JCM 6121 / CCUG 31486 / LMG 2827 / NBRC 12203 / NCIMB 8253 / ATH 2.4.1.) (Rhodobacter sphaeroides)).